Reading from the N-terminus, the 232-residue chain is BTB/POZ domain-containing protein KCTD11 (232 aa).

The 49-residue stretch at 1-49 (MLGAMFRAGTPMTPNLNPEGGGHYFIDRDGKAFRHILNFLRLGRLDLPL) folds into the BTB domain.

As to quaternary structure, homopentamer. Interacts with KCTD6 and KCTD21; KCTD11 and KCTD6 or KCTD21 may associate in pentameric assemblies. Component of the BCR(KCTD11) E3 ubiquitin ligase complex, at least composed of CUL3 and KCTD11 and RBX1. Interacts (via BTB domain) with CUL3; initially a 4:4 stoichiometry has been reported, however, electron microscopy revealed pentameric states of the BTB domain.

It participates in protein modification; protein ubiquitination. Functionally, plays a role as a marker and a regulator of neuronal differentiation; Up-regulated by a variety of neurogenic signals, such as retinoic acid, epidermal growth factor/EGF and NGFB/nerve growth factor. Induces apoptosis, growth arrest and the expression of cyclin-dependent kinase inhibitor CDKN1B. Plays a role as a tumor repressor and inhibits cell growth and tumorigenicity of medulloblastoma (MDB). Acts as a probable substrate-specific adapter for a BCR (BTB-CUL3-RBX1) E3 ubiquitin-protein ligase complex towards HDAC1. Functions as antagonist of the Hedgehog pathway on cell proliferation and differentiation by affecting the nuclear transfer of transcription factor GLI1, thus maintaining cerebellar granule cells in undifferentiated state, this effect probably occurs via HDAC1 down-regulation, keeping GLI1 acetylated and inactive. The protein is BTB/POZ domain-containing protein KCTD11 (KCTD11) of Bos taurus (Bovine).